The sequence spans 106 residues: Large ribosomal subunit protein uL23 (106 aa).

This sequence belongs to the universal ribosomal protein uL23 family. Part of the 50S ribosomal subunit. Contacts protein L29, and trigger factor when it is bound to the ribosome.

Functionally, one of the early assembly proteins it binds 23S rRNA. One of the proteins that surrounds the polypeptide exit tunnel on the outside of the ribosome. Forms the main docking site for trigger factor binding to the ribosome. This chain is Large ribosomal subunit protein uL23, found in Neisseria meningitidis serogroup C / serotype 2a (strain ATCC 700532 / DSM 15464 / FAM18).